The sequence spans 98 residues: UPF0235 protein Ping_3043 (98 aa).

The protein belongs to the UPF0235 family.

The sequence is that of UPF0235 protein Ping_3043 from Psychromonas ingrahamii (strain DSM 17664 / CCUG 51855 / 37).